Reading from the N-terminus, the 788-residue chain is Endonuclease MutS2 (788 aa).

Position 332-339 (332-339 (GPNTGGKT)) interacts with ATP. Positions 713 to 788 (VDLRGMDAEE…GTGVTVVELK (76 aa)) constitute a Smr domain.

Belongs to the DNA mismatch repair MutS family. MutS2 subfamily. In terms of assembly, homodimer. Binds to stalled ribosomes, contacting rRNA.

Functionally, endonuclease that is involved in the suppression of homologous recombination and thus may have a key role in the control of bacterial genetic diversity. Acts as a ribosome collision sensor, splitting the ribosome into its 2 subunits. Detects stalled/collided 70S ribosomes which it binds and splits by an ATP-hydrolysis driven conformational change. Acts upstream of the ribosome quality control system (RQC), a ribosome-associated complex that mediates the extraction of incompletely synthesized nascent chains from stalled ribosomes and their subsequent degradation. Probably generates substrates for RQC. This is Endonuclease MutS2 from Clostridium botulinum (strain Langeland / NCTC 10281 / Type F).